The chain runs to 257 residues: MVLIRVLANLLILQLSYAQKSSELVIGGDECNINEHPFLVLVYYDDYQCGGTLINEEWVLTAAHCNGENMEIYLGMHSKKVPNKDRRRRVPKEKFFCDSSKNYTKWNKDIMLIRLNRPVRKSAHIAPLSLPSSPPSVGSVCRIMGWGTISPTKVTLPDVPRCANINLLDYEVCRAVYPELPATSRTLCAGILEGGKDSCGGDSGGPLICNGQFQGIVSWGGDPCAQPHEPGLYTNVFDHLDWIKGIIAGNTDVTCPL.

The N-terminal stretch at 1–18 is a signal peptide; it reads MVLIRVLANLLILQLSYA. The propeptide occupies 19–24; that stretch reads QKSSEL. Residues 25–248 form the Peptidase S1 domain; sequence VIGGDECNIN…HLDWIKGIIA (224 aa). 6 cysteine pairs are disulfide-bonded: C31–C162, C49–C65, C97–C255, C141–C209, C173–C188, and C199–C224. H64 (charge relay system) is an active-site residue. N102 carries N-linked (GlcNAc...) asparagine glycosylation. D109 serves as the catalytic Charge relay system. The active-site Charge relay system is S203.

It belongs to the peptidase S1 family. Snake venom subfamily. In terms of assembly, monomer. As to expression, expressed by the venom gland.

It localises to the secreted. Snake venom serine protease that may act in the hemostasis system of the prey. The chain is Snake venom serine protease serpentokallikrein-2 from Protobothrops mucrosquamatus (Taiwan habu).